We begin with the raw amino-acid sequence, 389 residues long: 5-hydroxytryptamine receptor 1B (389 aa).

Residues 1 to 45 lie on the Extracellular side of the membrane; the sequence is MGNPEASCTPPAVLGSQTGLPHANVSAPPNNCSAPSHIYQDSIAL. 2 N-linked (GlcNAc...) asparagine glycosylation sites follow: Asn24 and Asn31. The chain crosses the membrane as a helical span at residues 46–71; the sequence is PWKVLLVVLLALITLATTLSNAFVIA. At 72-85 the chain is on the cytoplasmic side; sequence TVYRTRKLHTPANY. The chain crosses the membrane as a helical span at residues 86 to 110; sequence LIASLAFTDLLVSILVMPISTMYTV. Over 111 to 118 the chain is Extracellular; sequence TGRWTLGQ. The helical transmembrane segment at 119-144 threads the bilayer; sequence ALCDFWLSSDITCCTASIMHLCVIAL. Residues Cys121 and Cys198 are joined by a disulfide bond. Ergotamine-binding residues include Asp128 and Thr133. A DRY motif; important for ligand-induced conformation changes and signaling motif is present at residues 145-147; it reads DRY. The Cytoplasmic portion of the chain corresponds to 145-164; sequence DRYWAITDAVGYSAKRTPRR. The helical transmembrane segment at 165–183 threads the bilayer; it reads AAGMIALVWVFSICISLPP. The Extracellular portion of the chain corresponds to 184–204; the sequence is FFWRQAKAEEEVLDCLVNTDH. Residue Val200 coordinates ergotamine. Residues 205 to 228 form a helical membrane-spanning segment; it reads VLYTVYSTGGAFYLPTLLLIALYG. Residues 229–314 are Cytoplasmic-facing; that stretch reads RIYVEARSRI…AARERKATKT (86 aa). The helical transmembrane segment at 315–336 threads the bilayer; sequence LGVILGAFIVCWLPFFIISLVM. Topologically, residues 337 to 346 are extracellular; it reads PICKDACWFH. Residues 347–369 traverse the membrane as a helical segment; that stretch reads MAIFDFFTWLGYLNSLINPIIYT. The NPxxY motif; important for ligand-induced conformation changes and signaling signature appears at 364-368; the sequence is NPIIY. The Cytoplasmic portion of the chain corresponds to 370–389; sequence MSNEDFKQAFHKLIRFKCTT. Residue Cys387 is the site of S-palmitoyl cysteine attachment.

It belongs to the G-protein coupled receptor 1 family. As to quaternary structure, homodimer. Heterodimer with HTR1D. Phosphorylated. Desensitization of the receptor may be mediated by its phosphorylation. In terms of processing, palmitoylated.

It is found in the cell membrane. In terms of biological role, G-protein coupled receptor for 5-hydroxytryptamine (serotonin). Also functions as a receptor for ergot alkaloid derivatives, various anxiolytic and antidepressant drugs and other psychoactive substances, such as lysergic acid diethylamide (LSD). Ligand binding causes a conformation change that triggers signaling via guanine nucleotide-binding proteins (G proteins) and modulates the activity of downstream effectors, such as adenylate cyclase. HTR1B is coupled to G(i)/G(o) G alpha proteins and mediates inhibitory neurotransmission by inhibiting adenylate cyclase activity. Arrestin family members inhibit signaling via G proteins and mediate activation of alternative signaling pathways. Regulates the release of 5-hydroxytryptamine, dopamine and acetylcholine in the brain, and thereby affects neural activity, nociceptive processing, pain perception, mood and behavior. Besides, plays a role in vasoconstriction of cerebral arteries. The protein is 5-hydroxytryptamine receptor 1B (HTR1B) of Cavia porcellus (Guinea pig).